An 851-amino-acid polypeptide reads, in one-letter code: B-box type zinc finger protein ncl-1 (851 aa).

The disordered stretch occupies residues glycine 71 to proline 91. Residues serine 76 to proline 91 are compositionally biased toward low complexity. The B box-type 1; atypical zinc finger occupies valine 127–leucine 174. Zn(2+)-binding residues include cysteine 132, cysteine 135, cysteine 156, and histidine 160. A compositionally biased stretch (low complexity) spans threonine 176–serine 197. The tract at residues threonine 176–serine 211 is disordered. The B box-type 2 zinc finger occupies lysine 218 to isoleucine 261. Zn(2+)-binding residues include cysteine 223, histidine 226, cysteine 246, and histidine 251. Residues serine 303–lysine 331 are a coiled coil. 5 NHL repeats span residues histidine 573–glutamate 616, lysine 620–tyrosine 665, glycine 666–phenylalanine 707, glycine 708–glutamate 750, and glycine 751–aspartate 794.

Present in cells in which nucleoli are absent, and absent from large cells in which nucleoli are prominent. Highly expressed in the gonads.

The protein resides in the cytoplasm. Its function is as follows. Translational repressor that inhibits protein synthesis. Represses the translation of mRNAs such as fib-1, probably by being recruited by RNA-binding protein nos-2 and the Pumilio proteins puf-5, puf-8 and puf-9 to the consensus core PUF binding motif in the 3'-UTR of fib-1 mRNA. Negatively regulates ribosomal RNA (rRNA) synthesis, ribosomal protein synthesis and nucleolus size. Its role in the negative regulation of nucleolus size is most likely through its negative regulation of the translation of proteins such as the rRNA 2'-O-methyltransferase fib-1, and dao-5. Might act directly as a transcription factor to inhibit RNA polymerase I (rRNA) and III (5S RNA) transcription. Plays a role in embryonic development, and in particular, is involved in regulating the localization of proteins, such as par-2, that are required for embryonic cell polarity. Plays a role in the regulation of lifespan, and the response to nutrient availability. The chain is B-box type zinc finger protein ncl-1 from Caenorhabditis elegans.